The following is a 52-amino-acid chain: Superoxide dismutase [Cu-Zn] 2 (52 aa).

Cu cation is bound at residue histidine 44.

This sequence belongs to the Cu-Zn superoxide dismutase family. In terms of assembly, homodimer. It depends on Cu cation as a cofactor. Requires Zn(2+) as cofactor.

The protein resides in the cytoplasm. The catalysed reaction is 2 superoxide + 2 H(+) = H2O2 + O2. Destroys radicals which are normally produced within the cells and which are toxic to biological systems. The polypeptide is Superoxide dismutase [Cu-Zn] 2 (Debaryomyces hansenii (Yeast)).